Reading from the N-terminus, the 117-residue chain is Hainantoxin-XV.2 (117 aa).

The signal sequence occupies residues 1 to 20 (MKLCAVIIASLLVCAAVASS). Residues 18–55 (ASSSDNQKEFAQEKEMTREETQSLGEHEKDDEVTGSEE) form a disordered region. Positions 21 to 56 (SDNQKEFAQEKEMTREETQSLGEHEKDDEVTGSEER) are excised as a propeptide. Over residues 23–55 (NQKEFAQEKEMTREETQSLGEHEKDDEVTGSEE) the composition is skewed to basic and acidic residues. 4 disulfides stabilise this stretch: Cys58–Cys72, Cys65–Cys78, Cys69–Cys115, and Cys71–Cys91.

This sequence belongs to the neurotoxin 03 (Tx2) family. 02 subfamily. HNTX-XV sub-subfamily. In terms of tissue distribution, expressed by the venom gland.

Its subcellular location is the secreted. Putative ion channel inhibitor. The chain is Hainantoxin-XV.2 from Cyriopagopus hainanus (Chinese bird spider).